Consider the following 257-residue polypeptide: AN1-type zinc finger protein 2B (257 aa).

2 consecutive AN1-type zinc fingers follow at residues 4–52 (PDLG…QKDI) and 94–142 (KIFT…HPTS). Zn(2+) contacts are provided by C10, C15, C25, C28, C33, H36, H42, C44, C100, C105, C115, C118, C123, H126, H132, and C134. The segment at 141-151 (TSRAGLAAISR) is VCP/p97-interacting motif (VIM). A disordered region spans residues 153 to 187 (QAVASTSTVPSPSQTMPSCTSPSRATTRSPSWTAP). Residues 155–171 (VASTSTVPSPSQTMPSC) are compositionally biased toward polar residues. 2 positions are modified to phosphoserine: S163 and S173. Positions 172–186 (TSPSRATTRSPSWTA) are enriched in low complexity. 2 UIM domains span residues 197 to 216 (SEDE…TKPQ) and 221 to 240 (QEEE…AEYQ). C254 is subject to Cysteine methyl ester. Residue C254 is the site of S-geranylgeranyl cysteine attachment. The short motif at 254–257 (CSLC) is the CAAX motif element. Positions 255 to 257 (SLC) are cleaved as a propeptide — removed in mature form.

Binds 'Lys-48'-linked polyubiquitin chains of ubiquitinated proteins. Associates with the proteasome complex; upon exposure to arsenite. Interacts (via VIM motif) with VCP; the interaction is direct. Interacts with BAG6. Interacts with IGF1R (nascent precursor form). Interacts with DERL1, FAF2, NPLOC4 and UFD1; probably through VCP. Phosphorylated by MAPK14. Phosphorylation has no effect on association with the proteasome complex.

The protein resides in the endoplasmic reticulum membrane. Plays a role in protein homeostasis by regulating both the translocation and the ubiquitin-mediated proteasomal degradation of nascent proteins at the endoplasmic reticulum. It is involved in the regulation of signal-mediated translocation of proteins into the endoplasmic reticulum. It also plays a role in the ubiquitin-mediated proteasomal degradation of proteins for which signal-mediated translocation to the endoplasmic reticulum has failed. May therefore function in the endoplasmic reticulum stress-induced pre-emptive quality control, a mechanism that selectively attenuates the translocation of newly synthesized proteins into the endoplasmic reticulum and reroutes them to the cytosol for proteasomal degradation. By controlling the steady-state expression of the IGF1R receptor, indirectly regulates the insulin-like growth factor receptor signaling pathway. This is AN1-type zinc finger protein 2B from Homo sapiens (Human).